Consider the following 408-residue polypeptide: Zinc finger and SCAN domain-containing protein 1 (408 aa).

Positions 1–34 (MLPRPKAPASPRRPQTPTPSEQDADPGPASPRDT) are disordered. The SCAN box domain occupies 38–120 (RLRFRQFQYH…SLVEDLTQMC (83 aa)). Disordered stretches follow at residues 136–155 (WSFG…EPSQ), 177–203 (LETT…LLGS), and 215–273 (DEPE…GGTQ). Positions 177–187 (LETTQLQQSLH) are enriched in polar residues. 2 C2H2-type zinc fingers span residues 292-314 (FQCA…QKTH) and 320-342 (FPCP…GKIH). Residues 344-379 (LEPPRKKAPRSKGPRESVPPRDGAQGPVAPRSPKRP) form a disordered region. The C2H2-type 3 zinc-finger motif lies at 380–402 (FQCSVCGKAFPWMVHLIDHQKLH).

Its subcellular location is the nucleus. Its function is as follows. May be involved in transcriptional regulation. This chain is Zinc finger and SCAN domain-containing protein 1 (ZSCAN1), found in Homo sapiens (Human).